The following is a 417-amino-acid chain: D-amino acid dehydrogenase (417 aa).

Position 3–17 (3–17 (AVVLGSGVVGLMSAW)) interacts with FAD.

Belongs to the DadA oxidoreductase family. The cofactor is FAD.

It catalyses the reaction a D-alpha-amino acid + A + H2O = a 2-oxocarboxylate + AH2 + NH4(+). Its function is as follows. Oxidative deamination of D-amino acids. The polypeptide is D-amino acid dehydrogenase (Vibrio vulnificus (strain CMCP6)).